The following is a 310-amino-acid chain: Transcription initiation factor IIB (310 aa).

Residues 9 to 41 form a TFIIB-type zinc finger; it reads EKETKCPECGSDDLRGDYERAEIVCGKCGLVID. Residues C14, C17, C33, and C36 each coordinate Zn(2+). 2 tandem repeats follow at residues 127–210 and 221–302.

This sequence belongs to the TFIIB family.

In terms of biological role, stabilizes TBP binding to an archaeal box-A promoter. Also responsible for recruiting RNA polymerase II to the pre-initiation complex (DNA-TBP-TFIIB). This Methanothermobacter thermautotrophicus (strain ATCC 29096 / DSM 1053 / JCM 10044 / NBRC 100330 / Delta H) (Methanobacterium thermoautotrophicum) protein is Transcription initiation factor IIB.